A 207-amino-acid polypeptide reads, in one-letter code: Small ribosomal subunit protein uS4 (207 aa).

A disordered region spans residues 31 to 51 (KCKLDSKPGQHGRTSGARTSD). The S4 RNA-binding domain maps to 97-160 (SRLDNVVYRM…KKQARIRESL (64 aa)).

It belongs to the universal ribosomal protein uS4 family. In terms of assembly, part of the 30S ribosomal subunit. Contacts protein S5. The interaction surface between S4 and S5 is involved in control of translational fidelity.

Functionally, one of the primary rRNA binding proteins, it binds directly to 16S rRNA where it nucleates assembly of the body of the 30S subunit. In terms of biological role, with S5 and S12 plays an important role in translational accuracy. The sequence is that of Small ribosomal subunit protein uS4 from Bordetella avium (strain 197N).